Reading from the N-terminus, the 253-residue chain is Trypsin beta (253 aa).

The first 22 residues, 1–22 (MLKFVILLSAVACALGGTIPEG), serve as a signal peptide directing secretion. Positions 23–30 (LLPQLDGR) are cleaved as a propeptide — activation peptide. A Peptidase S1 domain is found at 31–253 (IVGGTATTIS…DLRSWVINNA (223 aa)). Residues Cys56 and Cys72 are joined by a disulfide bond. Residues His71 and Asp116 each act as charge relay system in the active site. 2 disulfides stabilise this stretch: Cys180/Cys197 and Cys206/Cys230. Ser210 serves as the catalytic Charge relay system.

The protein belongs to the peptidase S1 family.

The protein resides in the secreted. It is found in the extracellular space. The enzyme catalyses Preferential cleavage: Arg-|-Xaa, Lys-|-Xaa.. This Drosophila erecta (Fruit fly) protein is Trypsin beta (betaTry).